The sequence spans 479 residues: Ubiquinone biosynthesis monooxygenase COQ6, mitochondrial (479 aa).

The transit peptide at 1–17 (MFFSKVMLTRRILVRGL) directs the protein to the mitochondrion.

The protein belongs to the UbiH/COQ6 family. As to quaternary structure, component of a multi-subunit COQ enzyme complex, composed of at least COQ3, COQ4, COQ5, COQ6, COQ7 and COQ9. It depends on FAD as a cofactor.

The protein localises to the mitochondrion inner membrane. It catalyses the reaction 4-hydroxy-3-(all-trans-hexaprenyl)benzoate + 2 reduced [2Fe-2S]-[ferredoxin] + O2 + 2 H(+) = 3,4-dihydroxy-5-(all-trans-hexaprenyl)benzoate + 2 oxidized [2Fe-2S]-[ferredoxin] + H2O. It carries out the reaction 2-methoxy-6-(all-trans-hexaprenyl)phenol + 2 reduced [2Fe-2S]-[ferredoxin] + O2 + 2 H(+) = 2-methoxy-6-(all-trans-hexaprenyl)benzene-1,4-diol + 2 oxidized [2Fe-2S]-[ferredoxin] + H2O. The enzyme catalyses 4-amino-3-(all-trans-hexaprenyl)benzoate + 2 reduced [2Fe-2S]-[ferredoxin] + O2 + 2 H(+) = 4-amino-5-hydroxy-3-(all-trans-hexaprenyl)benzoate + 2 oxidized [2Fe-2S]-[ferredoxin] + H2O. The catalysed reaction is 4-amino-5-hydroxy-3-(all-trans-hexaprenyl)benzoate + 4 reduced [2Fe-2S]-[ferredoxin] + O2 + 5 H(+) = 3,4-dihydroxy-5-(all-trans-hexaprenyl)benzoate + 4 oxidized [2Fe-2S]-[ferredoxin] + NH4(+) + H2O. It functions in the pathway cofactor biosynthesis; ubiquinone biosynthesis. Functionally, FAD-dependent monooxygenase required for two non-consecutive steps during ubiquinone biosynthesis. Required for the C5-ring hydroxylation during ubiquinone biosynthesis by catalyzing the hydroxylation of 4-hydroxy-3-(all-trans-hexaprenyl)benzoic acid to 3,4-dihydroxy-5-(all-trans-hexaprenyl)benzoic acid. Also acts downstream of COQ4, for the C1-hydroxylation during ubiquinone biosynthesis by catalyzing the hydroxylation of 2-methoxy-6-(all-trans-hexaprenyl)phenol to 2-methoxy-6-(all-trans-hexaprenyl)benzene-1,4-diol. The electrons required for the hydroxylation reaction are funneled indirectly from NADPH via ferredoxin (YAH1) and ferredoxin reductase (ARH1) to COQ6. Can also convert 3-hexaprenyl-4-aminobenzoic acid (HAB), a COQ2-prenylated pABA, to DHHB in a two step process. HAB is first hydroxylated at C5 to yield 3-hexaprenyl-4-amino-5-hydroxybenzoic acid (HHAB) which is further deaminated at C4 by COQ6 to produce DHHB. This chain is Ubiquinone biosynthesis monooxygenase COQ6, mitochondrial, found in Saccharomyces cerevisiae (strain ATCC 204508 / S288c) (Baker's yeast).